We begin with the raw amino-acid sequence, 477 residues long: Ribulose bisphosphate carboxylase large chain (477 aa).

Residues 1-2 constitute a propeptide that is removed on maturation; that stretch reads MS. Position 3 is an N-acetylproline (Pro-3). Lys-14 bears the N6,N6,N6-trimethyllysine mark. 2 residues coordinate substrate: Asn-123 and Thr-173. Catalysis depends on Lys-175, which acts as the Proton acceptor. Residue Lys-177 coordinates substrate. Mg(2+)-binding residues include Lys-201, Asp-203, and Glu-204. Lys-201 carries the N6-carboxylysine modification. His-294 (proton acceptor) is an active-site residue. The substrate site is built by Arg-295, His-327, and Ser-379.

Belongs to the RuBisCO large chain family. Type I subfamily. As to quaternary structure, heterohexadecamer of 8 large chains and 8 small chains; disulfide-linked. The disulfide link is formed within the large subunit homodimers. It depends on Mg(2+) as a cofactor. Post-translationally, the disulfide bond which can form in the large chain dimeric partners within the hexadecamer appears to be associated with oxidative stress and protein turnover.

The protein resides in the plastid. It is found in the chloroplast. It carries out the reaction 2 (2R)-3-phosphoglycerate + 2 H(+) = D-ribulose 1,5-bisphosphate + CO2 + H2O. The enzyme catalyses D-ribulose 1,5-bisphosphate + O2 = 2-phosphoglycolate + (2R)-3-phosphoglycerate + 2 H(+). Its function is as follows. RuBisCO catalyzes two reactions: the carboxylation of D-ribulose 1,5-bisphosphate, the primary event in carbon dioxide fixation, as well as the oxidative fragmentation of the pentose substrate in the photorespiration process. Both reactions occur simultaneously and in competition at the same active site. This Solanum tuberosum (Potato) protein is Ribulose bisphosphate carboxylase large chain (rbcL).